A 106-amino-acid polypeptide reads, in one-letter code: Large ribosomal subunit protein uL24 (106 aa).

This sequence belongs to the universal ribosomal protein uL24 family. Part of the 50S ribosomal subunit.

Its function is as follows. One of two assembly initiator proteins, it binds directly to the 5'-end of the 23S rRNA, where it nucleates assembly of the 50S subunit. One of the proteins that surrounds the polypeptide exit tunnel on the outside of the subunit. The polypeptide is Large ribosomal subunit protein uL24 (Acinetobacter baylyi (strain ATCC 33305 / BD413 / ADP1)).